The chain runs to 500 residues: Ent-kaurene oxidase P450-4 (500 aa).

The chain crosses the membrane as a helical span at residues 6–26; it reads VHWLIYVAFGAWLCSYVIHVL. N-linked (GlcNAc...) asparagine glycosylation occurs at N240. Residue C441 participates in heme binding. N-linked (GlcNAc...) asparagine glycosylation occurs at N475.

The protein belongs to the cytochrome P450 family. The cofactor is heme.

It is found in the membrane. It catalyses the reaction ent-kaur-16-ene + 3 reduced [NADPH--hemoprotein reductase] + 3 O2 = ent-kaur-16-en-19-oate + 3 oxidized [NADPH--hemoprotein reductase] + 4 H2O + 4 H(+). Its pathway is plant hormone biosynthesis; gibberellin biosynthesis. Ent-kaurene oxidase; part of the gene cluster that mediates the biosynthesis of gibberellins (GAs), diterpenoids that may provide a selective advantage during infection of the preferred host plant, rice. Gibberellins (GAs) are diterpenoids and are synthesized via the mevalonate pathway. Biosynthesis of the major metabolite GA3 (gibberellic acid) from geranylgeranyl diphosphate (GGPP) requires 13 steps. The GGPP produced by the geranylgeranyl diphosphate synthase GGS2 is converted to ent-kaurene via ent-copalyldiphosphate in a two-step cyclization reaction performed by the bifunctional ent-copalyl diphosphate synthase/ent-kaurene synthase enzyme (CPS/KS). Ent-Kaurene is metabolized to GAs by a series of oxidation reactions catalyzed by cytochrome P450 monooxygenases. Cytochrome P450 monooxygenase P450-4 is an ent-kaurene oxidase that catalyzes the three oxidation steps between ent-kaurene and ent-kaurenoic acid. The highly multifunctional cytochrome P450 monooxygenase P450-1 then catalyzes four steps involving oxidation at two carbon atoms, in the main pathway from ent-kaurenoic acid to GA14 via GA12-aldehyde as well as producing kaurenolides and fujenoic acids as by-products. The cytochrome P450 monooxygenase P450-2 then converts GA14 to GA4 by removal of C-20. GA4 is further converted to GA7 by the GA4 desaturase DES via 1,2-desaturation before cytochrome P450 monooxygenase P450-3, a 13-hydroxylase, hydroxylates GA7 to GA3, the final product of the GA-biosynthetic pathway. The polypeptide is Ent-kaurene oxidase P450-4 (Gibberella fujikuroi (strain CBS 195.34 / IMI 58289 / NRRL A-6831) (Bakanae and foot rot disease fungus)).